The primary structure comprises 501 residues: Cytochrome P450 76M5 (501 aa).

The chain crosses the membrane as a helical span at residues 5–25; it reads ELWVLAAALAVSLLYYLAALM. Cysteine 443 lines the heme pocket.

The protein belongs to the cytochrome P450 family. Heme is required as a cofactor.

It is found in the membrane. It carries out the reaction ent-sandaracopimaradien-3beta-ol + reduced [NADPH--hemoprotein reductase] + O2 = oryzalexin E + oxidized [NADPH--hemoprotein reductase] + H2O + H(+). Functionally, enzyme of the diterpenoid metabolism involved in the biosynthesis of the oryzalexin class of phytoalexins. Hydroxylates ent-sandaracopimaradien. The protein is Cytochrome P450 76M5 of Oryza sativa subsp. japonica (Rice).